Consider the following 239-residue polypeptide: RING finger protein 151 (239 aa).

The segment at 20 to 58 (CSVCHGVLKRPTRLPCSHIFCKKCIFRWLARQNTCPCCR) adopts an RING-type zinc-finger fold. A TRAF-type zinc finger spans residues 101 to 156 (EHQDSCPFELMACPNEGCTVQVLRGVLDEHRQHCQQNGQQRCPLGCGSTLAALEGE).

Interacts with DTNBP1. Expressed in testis. Expressed in round spermatids of the stages VII-VIII semniniferous tubules. Expressed in elongating spermatids of stages VIII-IX seminiferous tubules (at protein level).

It localises to the cytoplasm. It is found in the nucleus. Its function is as follows. May be involved in acrosome formation of spermatids. The polypeptide is RING finger protein 151 (Rnf151) (Mus musculus (Mouse)).